The sequence spans 519 residues: Probable cytochrome P450 6g2 (519 aa).

Cys-460 lines the heme pocket.

It belongs to the cytochrome P450 family. Heme serves as cofactor.

It localises to the endoplasmic reticulum membrane. Its subcellular location is the microsome membrane. May be involved in the metabolism of insect hormones and in the breakdown of synthetic insecticides. This Drosophila melanogaster (Fruit fly) protein is Probable cytochrome P450 6g2 (Cyp6g2).